Here is a 478-residue protein sequence, read N- to C-terminus: Ninja-family protein 8 (478 aa).

Disordered stretches follow at residues 1–247, 337–374, and 454–478; these read MDDD…LTPG, FTAKDKADQTGTKQVDDGKKPQEAGASSSAHAEDEKKA, and DAPAQDNSATLPAFPAGNQATSAEN. Positions 23–35 are enriched in basic and acidic residues; sequence KARDAPLEPKAEP. The span at 169 to 179 shows a compositional bias: polar residues; sequence ISISTDDGSTG. The segment covering 180–189 has biased composition (acidic residues); sequence ENEDVAESEA. Positions 233-242 are enriched in low complexity; the sequence is SFSGSESSSG. Residues 339-358 show a composition bias toward basic and acidic residues; that stretch reads AKDKADQTGTKQVDDGKKPQ.

The protein belongs to the Ninja family.

The protein localises to the nucleus. The sequence is that of Ninja-family protein 8 from Zea mays (Maize).